The following is a 419-amino-acid chain: Putative nickel insertion protein (419 aa).

Positions 69 to 90 (HDPSNHPSQNTHHHHHHHTRHL) are disordered. Over residues 79–88 (THHHHHHHTR) the composition is skewed to basic residues.

This sequence belongs to the LarC family.

This is Putative nickel insertion protein from Rippkaea orientalis (strain PCC 8801 / RF-1) (Cyanothece sp. (strain PCC 8801)).